Reading from the N-terminus, the 301-residue chain is Probable alpha-L-glutamate ligase (301 aa).

The region spanning 104 to 287 is the ATP-grasp domain; sequence LQLLSRKGVG…VAGRIVSFIE (184 aa). ATP-binding positions include Lys-141, 178–179, Asp-187, and 211–213; these read EF and RSN. Mg(2+) contacts are provided by Asp-248, Glu-260, and Asn-262. Residues Asp-248, Glu-260, and Asn-262 each coordinate Mn(2+).

Belongs to the RimK family. Requires Mg(2+) as cofactor. Mn(2+) serves as cofactor.

This is Probable alpha-L-glutamate ligase from Thioalkalivibrio sulfidiphilus (strain HL-EbGR7).